Consider the following 121-residue polypeptide: Large ribosomal subunit protein uL18 (121 aa).

Belongs to the universal ribosomal protein uL18 family. As to quaternary structure, part of the 50S ribosomal subunit; part of the 5S rRNA/L5/L18/L25 subcomplex. Contacts the 5S and 23S rRNAs.

In terms of biological role, this is one of the proteins that bind and probably mediate the attachment of the 5S RNA into the large ribosomal subunit, where it forms part of the central protuberance. The chain is Large ribosomal subunit protein uL18 from Methylibium petroleiphilum (strain ATCC BAA-1232 / LMG 22953 / PM1).